We begin with the raw amino-acid sequence, 129 residues long: Small ribosomal subunit protein uS11 (129 aa).

Belongs to the universal ribosomal protein uS11 family. In terms of assembly, part of the 30S ribosomal subunit. Interacts with proteins S7 and S18. Binds to IF-3.

Functionally, located on the platform of the 30S subunit, it bridges several disparate RNA helices of the 16S rRNA. Forms part of the Shine-Dalgarno cleft in the 70S ribosome. The polypeptide is Small ribosomal subunit protein uS11 (Methylobacterium radiotolerans (strain ATCC 27329 / DSM 1819 / JCM 2831 / NBRC 15690 / NCIMB 10815 / 0-1)).